The chain runs to 139 residues: Protein LTO1 homolog (139 aa).

It belongs to the LTO1 family.

The sequence is that of Protein LTO1 homolog from Dictyostelium discoideum (Social amoeba).